We begin with the raw amino-acid sequence, 132 residues long: MIMPLINGLKITLKHMFMKPVTLQYPDERPTPSPNFRGLHALKVSHDKAKCVACYLCPTVCPAKCITVEAGEDATHDKYAERYEIDMLRCIFCGYCVEACPVDALKMTGQFELANYKREDFIFVKERLLEKK.

4Fe-4S ferredoxin-type domains lie at 42–71 (LKVS…VEAG) and 81–110 (ERYE…MTGQ). Positions 51, 54, 57, 61, 90, 93, 96, and 100 each coordinate [4Fe-4S] cluster.

It belongs to the complex I 23 kDa subunit family. NDH-1 is composed of 14 different subunits. Subunits NuoA, H, J, K, L, M, N constitute the membrane sector of the complex. Requires [4Fe-4S] cluster as cofactor.

It localises to the cell inner membrane. The catalysed reaction is a quinone + NADH + 5 H(+)(in) = a quinol + NAD(+) + 4 H(+)(out). NDH-1 shuttles electrons from NADH, via FMN and iron-sulfur (Fe-S) centers, to quinones in the respiratory chain. The immediate electron acceptor for the enzyme in this species is believed to be ubiquinone. Couples the redox reaction to proton translocation (for every two electrons transferred, four hydrogen ions are translocated across the cytoplasmic membrane), and thus conserves the redox energy in a proton gradient. The chain is NADH-quinone oxidoreductase subunit I 1 from Geobacter sulfurreducens (strain ATCC 51573 / DSM 12127 / PCA).